The primary structure comprises 828 residues: Periplasmic nitrate reductase (828 aa).

A signal peptide (tat-type signal) is located at residues 1–31; that stretch reads MKLSRRSFMKANAVAAAAAAAGLSVPGVARA. In terms of domain architecture, 4Fe-4S Mo/W bis-MGD-type spans 39–95; sequence IKWDKAPCRFCGTGCGVLVGTQQGRVVACQGDPDAPVNRGLNCIKGYFLPKIMYGKD. Cysteine 46, cysteine 49, cysteine 53, and cysteine 81 together coordinate [4Fe-4S] cluster. Mo-bis(molybdopterin guanine dinucleotide)-binding positions include lysine 83, glutamine 150, asparagine 175, cysteine 179, 212–219, 243–247, 262–264, methionine 372, glutamine 376, asparagine 482, 508–509, lysine 531, aspartate 558, and 718–727; these read WGSNMAEM, STFQH, QSD, SD, and TGRVLEHWHT. Phenylalanine 794 is a binding site for substrate. Asparagine 802 and lysine 819 together coordinate Mo-bis(molybdopterin guanine dinucleotide).

It belongs to the prokaryotic molybdopterin-containing oxidoreductase family. NasA/NapA/NarB subfamily. Component of the periplasmic nitrate reductase NapAB complex composed of NapA and NapB. Requires [4Fe-4S] cluster as cofactor. Mo-bis(molybdopterin guanine dinucleotide) serves as cofactor. Predicted to be exported by the Tat system. The position of the signal peptide cleavage has not been experimentally proven.

It is found in the periplasm. It carries out the reaction 2 Fe(II)-[cytochrome] + nitrate + 2 H(+) = 2 Fe(III)-[cytochrome] + nitrite + H2O. Its function is as follows. Catalytic subunit of the periplasmic nitrate reductase complex NapAB. Receives electrons from NapB and catalyzes the reduction of nitrate to nitrite. The sequence is that of Periplasmic nitrate reductase from Salmonella arizonae (strain ATCC BAA-731 / CDC346-86 / RSK2980).